We begin with the raw amino-acid sequence, 418 residues long: Glutamyl-tRNA reductase (418 aa).

Substrate is bound by residues 49–52 (TCNR), Ser-109, 114–116 (EPQ), and Gln-120. Cys-50 functions as the Nucleophile in the catalytic mechanism. 189–194 (GAGETI) contributes to the NADP(+) binding site.

It belongs to the glutamyl-tRNA reductase family. In terms of assembly, homodimer.

The enzyme catalyses (S)-4-amino-5-oxopentanoate + tRNA(Glu) + NADP(+) = L-glutamyl-tRNA(Glu) + NADPH + H(+). Its pathway is porphyrin-containing compound metabolism; protoporphyrin-IX biosynthesis; 5-aminolevulinate from L-glutamyl-tRNA(Glu): step 1/2. Functionally, catalyzes the NADPH-dependent reduction of glutamyl-tRNA(Glu) to glutamate 1-semialdehyde (GSA). This Shigella flexneri protein is Glutamyl-tRNA reductase.